Reading from the N-terminus, the 155-residue chain is Protein SprT-like (155 aa).

The SprT-like domain maps to 7–144 (QRHMEEVSLQ…CGSCGGKLKQ (138 aa)). Histidine 67 lines the Zn(2+) pocket. Glutamate 68 is a catalytic residue. Residue histidine 71 coordinates Zn(2+).

Belongs to the SprT family. Requires Zn(2+) as cofactor.

The protein localises to the cytoplasm. The protein is Protein SprT-like of Listeria welshimeri serovar 6b (strain ATCC 35897 / DSM 20650 / CCUG 15529 / CIP 8149 / NCTC 11857 / SLCC 5334 / V8).